A 725-amino-acid chain; its full sequence is Ribonucleoside-diphosphate reductase subunit alpha (725 aa).

Residues threonine 172, 188-189, glycine 217, 397-401, and 599-603 each bind substrate; these read SC, NLCSE, and PTGSI. Cysteines 189 and 426 form a disulfide. Asparagine 397 serves as the catalytic Proton acceptor. Cysteine 399 serves as the catalytic Cysteine radical intermediate. Glutamate 401 (proton acceptor) is an active-site residue.

The protein belongs to the ribonucleoside diphosphate reductase large chain family. As to quaternary structure, tetramer of two alpha and two beta subunits. Co-immunoprecipitates with DarG in the presence and absence of darT.

It carries out the reaction a 2'-deoxyribonucleoside 5'-diphosphate + [thioredoxin]-disulfide + H2O = a ribonucleoside 5'-diphosphate + [thioredoxin]-dithiol. Under complex allosteric control mediated by deoxynucleoside triphosphates and ATP binding. The type of nucleotide bound at the specificity site determines substrate preference. It seems probable that ATP makes the enzyme reduce CDP and UDP, dGTP favors ADP reduction and dTTP favors GDP reduction. CDP reduction is stimulated by dATP. In terms of biological role, provides the precursors necessary for DNA synthesis. Catalyzes the biosynthesis of deoxyribonucleotides from the corresponding ribonucleotides. When coexpressed in E.coli with nrdF2 the 2 proteins complement a temperature-sensitive E.coli mutant, however coexpression with nrdF1 does not complement. This Mycobacterium tuberculosis (strain ATCC 25618 / H37Rv) protein is Ribonucleoside-diphosphate reductase subunit alpha (nrdE).